The chain runs to 233 residues: tRNA (guanine-N(7)-)-methyltransferase (233 aa).

S-adenosyl-L-methionine is bound by residues Glu62, Glu87, Asp116, and Asp138. Asp138 is an active-site residue. Residues Lys142, Asp174, and 212–215 (TRYE) each bind substrate.

The protein belongs to the class I-like SAM-binding methyltransferase superfamily. TrmB family.

The catalysed reaction is guanosine(46) in tRNA + S-adenosyl-L-methionine = N(7)-methylguanosine(46) in tRNA + S-adenosyl-L-homocysteine. It participates in tRNA modification; N(7)-methylguanine-tRNA biosynthesis. Functionally, catalyzes the formation of N(7)-methylguanine at position 46 (m7G46) in tRNA. The polypeptide is tRNA (guanine-N(7)-)-methyltransferase (Bartonella henselae (strain ATCC 49882 / DSM 28221 / CCUG 30454 / Houston 1) (Rochalimaea henselae)).